A 380-amino-acid chain; its full sequence is Cytochrome b (380 aa).

Transmembrane regions (helical) follow at residues 33–53, 77–98, 113–133, and 178–198; these read FGSL…FLAM, WIIR…FLHV, WNIG…GYVL, and FFTL…LHLL. Positions 83 and 97 each coordinate heme b. 2 residues coordinate heme b: His182 and His196. Residue His201 coordinates a ubiquinone. A run of 4 helical transmembrane segments spans residues 226–246, 288–308, 320–340, and 347–367; these read TKDI…TLFS, LGGV…PILH, LSQL…WIGG, and FITI…ILMP.

Belongs to the cytochrome b family. The cytochrome bc1 complex contains 11 subunits: 3 respiratory subunits (MT-CYB, CYC1 and UQCRFS1), 2 core proteins (UQCRC1 and UQCRC2) and 6 low-molecular weight proteins (UQCRH/QCR6, UQCRB/QCR7, UQCRQ/QCR8, UQCR10/QCR9, UQCR11/QCR10 and a cleavage product of UQCRFS1). This cytochrome bc1 complex then forms a dimer. It depends on heme b as a cofactor.

It localises to the mitochondrion inner membrane. Its function is as follows. Component of the ubiquinol-cytochrome c reductase complex (complex III or cytochrome b-c1 complex) that is part of the mitochondrial respiratory chain. The b-c1 complex mediates electron transfer from ubiquinol to cytochrome c. Contributes to the generation of a proton gradient across the mitochondrial membrane that is then used for ATP synthesis. This chain is Cytochrome b (MT-CYB), found in Pan paniscus (Pygmy chimpanzee).